We begin with the raw amino-acid sequence, 65 residues long: Toxin CsEM1 (65 aa).

The LCN-type CS-alpha/beta domain occupies 1–65 (KEGYLVNSYT…VWPLPNKTCN (65 aa)). Cystine bridges form between C12–C64, C16–C40, C25–C45, and C29–C47.

The protein belongs to the long (4 C-C) scorpion toxin superfamily. Sodium channel inhibitor family. Beta subfamily. In terms of tissue distribution, expressed by the venom gland.

It is found in the secreted. In terms of biological role, beta toxins bind voltage-independently at site-4 of sodium channels (Nav) and shift the voltage of activation toward more negative potentials thereby affecting sodium channel activation and promoting spontaneous and repetitive firing. Highly potent. This is Toxin CsEM1 from Centruroides sculpturatus (Arizona bark scorpion).